A 270-amino-acid chain; its full sequence is Urease accessory protein UreD (270 aa).

This sequence belongs to the UreD family. UreD, UreF and UreG form a complex that acts as a GTP-hydrolysis-dependent molecular chaperone, activating the urease apoprotein by helping to assemble the nickel containing metallocenter of UreC. The UreE protein probably delivers the nickel.

The protein resides in the cytoplasm. In terms of biological role, required for maturation of urease via the functional incorporation of the urease nickel metallocenter. This is Urease accessory protein UreD from Klebsiella pneumoniae.